Consider the following 205-residue polypeptide: Probable 3'-5' exonuclease KapD (205 aa).

In terms of domain architecture, Exonuclease spans 6–173 (LLIIDFEFTM…DDALTAYKLF (168 aa)). Residues D10, E12, and D104 each coordinate Mg(2+). E12 (proton acceptor) is an active-site residue. E12 lines the AMP pocket. H160 functions as the Proton acceptor in the catalytic mechanism. H160 provides a ligand contact to AMP. D165 contacts Mg(2+).

Requires Mg(2+) as cofactor.

Specifically inhibits the KinA pathway to sporulation. In Bacillus subtilis (strain 168), this protein is Probable 3'-5' exonuclease KapD (kapD).